Here is a 450-residue protein sequence, read N- to C-terminus: 5-amino-6-(D-ribitylamino)uracil--L-tyrosine 4-hydroxyphenyl transferase (450 aa).

Positions 1-24 (MPDVPETVGTPDGSTEFEHRPTTD) are disordered. Residues 82 to 350 (VTFVANLNNN…MIAVSRLFLD (269 aa)) enclose the Radical SAM core domain. [4Fe-4S] cluster is bound by residues cysteine 96, cysteine 100, and cysteine 103. The interval 430–450 (PDADVLGPQLGPRADGTPLLD) is disordered.

Belongs to the radical SAM superfamily. CofH family. In terms of assembly, consists of two subunits, CofG and CofH. It depends on [4Fe-4S] cluster as a cofactor.

The catalysed reaction is 5-amino-6-(D-ribitylamino)uracil + L-tyrosine + S-adenosyl-L-methionine = 5-amino-5-(4-hydroxybenzyl)-6-(D-ribitylimino)-5,6-dihydrouracil + 2-iminoacetate + 5'-deoxyadenosine + L-methionine + H(+). The protein operates within cofactor biosynthesis; coenzyme F0 biosynthesis. Catalyzes the radical-mediated synthesis of 5-amino-5-(4-hydroxybenzyl)-6-(D-ribitylimino)-5,6-dihydrouracil from 5-amino-6-(D-ribitylamino)uracil and L-tyrosine. The sequence is that of 5-amino-6-(D-ribitylamino)uracil--L-tyrosine 4-hydroxyphenyl transferase from Haloarcula marismortui (strain ATCC 43049 / DSM 3752 / JCM 8966 / VKM B-1809) (Halobacterium marismortui).